Here is an 89-residue protein sequence, read N- to C-terminus: Small ribosomal subunit protein uS15 (89 aa).

Positions 1–24 are disordered; that stretch reads MSLDTTEKQQLINSHQTHATDTGS. Over residues 8 to 24 the composition is skewed to polar residues; that stretch reads KQQLINSHQTHATDTGS.

It belongs to the universal ribosomal protein uS15 family. In terms of assembly, part of the 30S ribosomal subunit. Forms a bridge to the 50S subunit in the 70S ribosome, contacting the 23S rRNA.

In terms of biological role, one of the primary rRNA binding proteins, it binds directly to 16S rRNA where it helps nucleate assembly of the platform of the 30S subunit by binding and bridging several RNA helices of the 16S rRNA. Forms an intersubunit bridge (bridge B4) with the 23S rRNA of the 50S subunit in the ribosome. In Synechococcus sp. (strain CC9311), this protein is Small ribosomal subunit protein uS15.